The chain runs to 175 residues: 6,7-dimethyl-8-ribityllumazine synthase (175 aa).

5-amino-6-(D-ribitylamino)uracil contacts are provided by residues Phe-24, 58–60 (ALE), and 82–84 (AVI). (2S)-2-hydroxy-3-oxobutyl phosphate is bound at residue 87–88 (ET). The active-site Proton donor is the His-90. A 5-amino-6-(D-ribitylamino)uracil-binding site is contributed by Asn-115. Arg-129 provides a ligand contact to (2S)-2-hydroxy-3-oxobutyl phosphate. Positions 151-175 (LEPEEDDEDEDEEDEDFDDEETDRR) are disordered. A compositionally biased stretch (acidic residues) spans 152-175 (EPEEDDEDEDEEDEDFDDEETDRR).

The protein belongs to the DMRL synthase family.

It carries out the reaction (2S)-2-hydroxy-3-oxobutyl phosphate + 5-amino-6-(D-ribitylamino)uracil = 6,7-dimethyl-8-(1-D-ribityl)lumazine + phosphate + 2 H2O + H(+). It functions in the pathway cofactor biosynthesis; riboflavin biosynthesis; riboflavin from 2-hydroxy-3-oxobutyl phosphate and 5-amino-6-(D-ribitylamino)uracil: step 1/2. Catalyzes the formation of 6,7-dimethyl-8-ribityllumazine by condensation of 5-amino-6-(D-ribitylamino)uracil with 3,4-dihydroxy-2-butanone 4-phosphate. This is the penultimate step in the biosynthesis of riboflavin. This chain is 6,7-dimethyl-8-ribityllumazine synthase, found in Bordetella petrii (strain ATCC BAA-461 / DSM 12804 / CCUG 43448).